The following is a 550-amino-acid chain: Arginine--tRNA ligase (550 aa).

A 'HIGH' region motif is present at residues 130-140 (ANPTGPIHIGG).

This sequence belongs to the class-I aminoacyl-tRNA synthetase family. Monomer.

Its subcellular location is the cytoplasm. The enzyme catalyses tRNA(Arg) + L-arginine + ATP = L-arginyl-tRNA(Arg) + AMP + diphosphate. This chain is Arginine--tRNA ligase, found in Mycobacterium sp. (strain JLS).